The chain runs to 79 residues: Morintide mO2 (79 aa).

An N-terminal signal peptide occupies residues 1–20; it reads MAKLSFLSLFLLCLVATATA. Residues 21 to 63 form the Chitin-binding type-1 domain; it reads QNCGRQAGNRACANGLCCSQYGFCGSTSEYCSRANGCQSNCRG. 4 disulfides stabilise this stretch: Cys-23-Cys-38, Cys-32-Cys-44, Cys-37-Cys-51, and Cys-57-Cys-61. Residues 64–79 constitute a propeptide that is removed on maturation; that stretch reads GGGAGGAGGGAGGGSP.

As to expression, leaves (at protein level).

Its function is as follows. Chitin-binding protein which functions in defense against chitin-containing fungal pathogens. The chain is Morintide mO2 from Moringa oleifera (Horseradish tree).